A 354-amino-acid polypeptide reads, in one-letter code: Uroporphyrinogen decarboxylase (354 aa).

Substrate is bound by residues 27 to 31 (RQAGR), Asp-77, Tyr-154, Thr-209, and His-327.

It belongs to the uroporphyrinogen decarboxylase family. In terms of assembly, homodimer.

It localises to the cytoplasm. It carries out the reaction uroporphyrinogen III + 4 H(+) = coproporphyrinogen III + 4 CO2. Its pathway is porphyrin-containing compound metabolism; protoporphyrin-IX biosynthesis; coproporphyrinogen-III from 5-aminolevulinate: step 4/4. Functionally, catalyzes the decarboxylation of four acetate groups of uroporphyrinogen-III to yield coproporphyrinogen-III. The sequence is that of Uroporphyrinogen decarboxylase from Salmonella paratyphi A (strain ATCC 9150 / SARB42).